The sequence spans 220 residues: 7-cyano-7-deazaguanine synthase (220 aa).

10 to 20 (FSGGQDSTTCL) contacts ATP. 4 residues coordinate Zn(2+): C186, C195, C198, and C201.

Belongs to the QueC family. As to quaternary structure, homodimer. Zn(2+) serves as cofactor.

The catalysed reaction is 7-carboxy-7-deazaguanine + NH4(+) + ATP = 7-cyano-7-deazaguanine + ADP + phosphate + H2O + H(+). The protein operates within purine metabolism; 7-cyano-7-deazaguanine biosynthesis. Functionally, catalyzes the ATP-dependent conversion of 7-carboxy-7-deazaguanine (CDG) to 7-cyano-7-deazaguanine (preQ(0)). This Bacillus cereus (strain AH187) protein is 7-cyano-7-deazaguanine synthase.